Reading from the N-terminus, the 719-residue chain is Fatty acid oxidation complex subunit alpha (719 aa).

The segment at 1–190 is enoyl-CoA hydratase/isomerase; that stretch reads MVYQGNRITV…KLGLVDATVA (190 aa). D298 is a binding site for substrate. Residues 313–719 form a 3-hydroxyacyl-CoA dehydrogenase region; that stretch reads HEINEAAVLG…AAGETFYATA (407 aa). Residues M326, D345, 402-404, K409, and S431 each bind NAD(+); that span reads VVE. H452 serves as the catalytic For 3-hydroxyacyl-CoA dehydrogenase activity. Position 455 (N455) interacts with NAD(+). Position 502 (N502) interacts with substrate.

It in the N-terminal section; belongs to the enoyl-CoA hydratase/isomerase family. This sequence in the C-terminal section; belongs to the 3-hydroxyacyl-CoA dehydrogenase family. Heterotetramer of two alpha chains (FadB) and two beta chains (FadA).

The enzyme catalyses a (3S)-3-hydroxyacyl-CoA + NAD(+) = a 3-oxoacyl-CoA + NADH + H(+). It carries out the reaction a (3S)-3-hydroxyacyl-CoA = a (2E)-enoyl-CoA + H2O. It catalyses the reaction a 4-saturated-(3S)-3-hydroxyacyl-CoA = a (3E)-enoyl-CoA + H2O. The catalysed reaction is (3S)-3-hydroxybutanoyl-CoA = (3R)-3-hydroxybutanoyl-CoA. The enzyme catalyses a (3Z)-enoyl-CoA = a 4-saturated (2E)-enoyl-CoA. It carries out the reaction a (3E)-enoyl-CoA = a 4-saturated (2E)-enoyl-CoA. It functions in the pathway lipid metabolism; fatty acid beta-oxidation. In terms of biological role, involved in the aerobic and anaerobic degradation of long-chain fatty acids via beta-oxidation cycle. Catalyzes the formation of 3-oxoacyl-CoA from enoyl-CoA via L-3-hydroxyacyl-CoA. It can also use D-3-hydroxyacyl-CoA and cis-3-enoyl-CoA as substrate. This chain is Fatty acid oxidation complex subunit alpha, found in Psychrobacter arcticus (strain DSM 17307 / VKM B-2377 / 273-4).